Reading from the N-terminus, the 110-residue chain is MVRRTGVTLLVVALVVVALVSSVSAQLNFSPGWGKRAAAGSGSSGGVGEAVSALHHSVGGAPGGVVPPGSSSSSGDSCGPIPVSAVMHIYRLIRNEAVRLVQCQDEEYLG.

The first 25 residues, 1 to 25 (MVRRTGVTLLVVALVVVALVSSVSA), serve as a signal peptide directing secretion. At glutamine 26 the chain carries Pyrrolidone carboxylic acid. Tryptophan 33 is subject to Tryptophan amide.

It belongs to the AKH/HRTH/RPCH family.

It localises to the secreted. This hormone adapts the animal to light backgrounds by stimulating concentration of the pigment of its red body-chromatophores. The chain is Red pigment-concentrating prohormone from Carcinus maenas (Common shore crab).